The chain runs to 217 residues: Biotin transport regulator (217 aa).

The interval Gly-14–Thr-49 is disordered.

In terms of biological role, may be part of a system that R.meliloti uses to respond to plant (alfalfa) biotin signals. The chain is Biotin transport regulator (bioS) from Rhizobium meliloti (strain 1021) (Ensifer meliloti).